Consider the following 118-residue polypeptide: Large ribosomal subunit protein uL18 (118 aa).

The protein belongs to the universal ribosomal protein uL18 family. Part of the 50S ribosomal subunit; part of the 5S rRNA/L5/L18/L25 subcomplex. Contacts the 5S and 23S rRNAs.

Functionally, this is one of the proteins that bind and probably mediate the attachment of the 5S RNA into the large ribosomal subunit, where it forms part of the central protuberance. This Wolinella succinogenes (strain ATCC 29543 / DSM 1740 / CCUG 13145 / JCM 31913 / LMG 7466 / NCTC 11488 / FDC 602W) (Vibrio succinogenes) protein is Large ribosomal subunit protein uL18.